A 443-amino-acid chain; its full sequence is Transcriptional adapter 2-alpha (443 aa).

The residue at position 6 (Ser-6) is a Phosphoserine. The segment at 12–69 (SDKPPCRGCSSYLMEPYIKCAECGPPPFFLCLQCFTRGFEYKKHQSDHTYEIMTSDFP) adopts a ZZ-type zinc-finger fold. Zn(2+)-binding residues include Cys-17, Cys-20, Cys-31, Cys-34, Cys-42, Cys-45, His-55, and His-59. An SANT domain is found at 70–122 (VLDPSWTAQEEMALLEAVMDCGFGNWQDVANQMCTKTKEECEKHYMKHFINNP). Glycyl lysine isopeptide (Lys-Gly) (interchain with G-Cter in SUMO2) cross-links involve residues Lys-132 and Lys-138. The SWIRM domain occupies 356–443 (NSGRRSAPPL…LIREGYITKA (88 aa)). A DNA-binding region spans residues 426-435 (KTRKIYDFLI).

In terms of assembly, interacts with GCN5 and NR3C1. Associated with the P/CAF protein in the PCAF complex. Component of the PCAF complex, at least composed of TADA2L/ADA2, TADA3L/ADA3, TAF5L/PAF65-beta, TAF6L/PAF65-alpha, TAF10/TAFII30, TAF12/TAFII20, TAF9/TAFII31 and TRRAP. Component of the ADA2A-containing complex (ATAC), composed of KAT14, KAT2A, TADA2L, TADA3L, ZZ3, MBIP, WDR5, YEATS2, CCDC101 and DR1. Interacts with CCDC134.

Its subcellular location is the nucleus. It is found in the chromosome. In terms of biological role, component of the ATAC complex, a complex with histone acetyltransferase activity on histones H3 and H4. Required for the function of some acidic activation domains, which activate transcription from a distant site. Binds double-stranded DNA. Binds dinucleosomes, probably at the linker region between neighboring nucleosomes. Plays a role in chromatin remodeling. May promote TP53/p53 'Lys-321' acetylation, leading to reduced TP53 stability and transcriptional activity. May also promote XRCC6 acetylation thus facilitating cell apoptosis in response to DNA damage. This is Transcriptional adapter 2-alpha (Tada2a) from Rattus norvegicus (Rat).